The following is a 259-amino-acid chain: Isoepoxydon dehydrogenase patN (259 aa).

NADP(+)-binding residues include Asn96 and Arg125. Residues Ser143 and Ser144 each act as proton donor in the active site. 3 residues coordinate NADP(+): Tyr158, Lys162, and Ile191. Tyr158 (proton acceptor) is an active-site residue. Lys162 acts as the Lowers pKa of active site Tyr in catalysis.

It belongs to the short-chain dehydrogenases/reductases (SDR) family.

The protein localises to the cytoplasm. Its subcellular location is the cytosol. It catalyses the reaction isoepoxydon + NADP(+) = phyllostine + NADPH + H(+). It functions in the pathway mycotoxin biosynthesis; patulin biosynthesis. Its function is as follows. Isoepoxydon dehydrogenase; part of the gene cluster that mediates the biosynthesis of patulin, an acetate-derived tetraketide mycotoxin produced by several fungal species that shows antimicrobial properties against several bacteria. PatN catalyzes the conversion of isoepoxydon into phyllostine. The pathway begins with the synthesis of 6-methylsalicylic acid by the polyketide synthase (PKS) patK via condensation of acetate and malonate units. The 6-methylsalicylic acid decarboxylase patG then catalyzes the decarboxylation of 6-methylsalicylic acid to yield m-cresol (also known as 3-methylphenol). These first reactions occur in the cytosol. The intermediate m-cresol is then transported into the endoplasmic reticulum where the cytochrome P450 monooxygenase patH converts it to m-hydroxybenzyl alcohol, which is further converted to gentisyl alcohol by the cytochrome P450 monooxygenase patI. The oxidoreductases patJ and patO further convert gentisyl alcohol to isoepoxydon in the vacuole. PatN catalyzes then the transformation of isoepoxydon into phyllostine. The cluster protein patF is responsible for the conversion from phyllostine to neopatulin whereas the alcohol dehydrogenase patD converts neopatulin to E-ascladiol. The steps between isoepoxydon and E-ascladiol occur in the cytosol, and E-ascladiol is probably secreted to the extracellular space by one of the cluster-specific transporters patC or patM. Finally, the secreted patulin synthase patE catalyzes the conversion of E-ascladiol to patulin. The polypeptide is Isoepoxydon dehydrogenase patN (Aspergillus clavatus (strain ATCC 1007 / CBS 513.65 / DSM 816 / NCTC 3887 / NRRL 1 / QM 1276 / 107)).